The sequence spans 350 residues: Protein RecA (350 aa).

68–75 (GPESSGKT) lines the ATP pocket.

This sequence belongs to the RecA family.

The protein localises to the cytoplasm. Can catalyze the hydrolysis of ATP in the presence of single-stranded DNA, the ATP-dependent uptake of single-stranded DNA by duplex DNA, and the ATP-dependent hybridization of homologous single-stranded DNAs. It interacts with LexA causing its activation and leading to its autocatalytic cleavage. This is Protein RecA from Mycolicibacterium gilvum (strain PYR-GCK) (Mycobacterium gilvum (strain PYR-GCK)).